Consider the following 171-residue polypeptide: MLTVEVYEMSKKIDIKFKLTIQEKIEIFNIIKNYRTVRSSLIEILKFVQKSYGWISNELITELACILKISKCDIEEIATFYSQIFRQPIGRNIIKYCDSVVCYVNGCEKIRCSLEKNLNVNVGETTKDFKFTLLPICCLGNCDKSPTIMINDDLYSNVTEYSVIVLLESYQ.

[2Fe-2S] cluster is bound by residues C97, C102, C138, and C142.

Belongs to the complex I 24 kDa subunit family. Composed of 13 different subunits. Subunits NuoCD, E, F, and G constitute the peripheral sector of the complex. [2Fe-2S] cluster serves as cofactor.

It carries out the reaction a quinone + NADH + 5 H(+)(in) = a quinol + NAD(+) + 4 H(+)(out). In terms of biological role, NDH-1 shuttles electrons from NADH, via FMN and iron-sulfur (Fe-S) centers, to quinones in the respiratory chain. Couples the redox reaction to proton translocation (for every two electrons transferred, four hydrogen ions are translocated across the cytoplasmic membrane), and thus conserves the redox energy in a proton gradient. The protein is NADH-quinone oxidoreductase subunit E (nuoE) of Buchnera aphidicola subsp. Baizongia pistaciae (strain Bp).